Reading from the N-terminus, the 520-residue chain is Cytochrome P450 monooxygenase btcC (520 aa).

Residues 2–22 form a helical membrane-spanning segment; the sequence is IFLLTLAGLKVLSIVILFGII. The N-linked (GlcNAc...) asparagine glycan is linked to Asn177. Cys448 is a binding site for heme. Residue Asn511 is glycosylated (N-linked (GlcNAc...) asparagine).

It belongs to the cytochrome P450 family. The cofactor is heme.

The protein localises to the membrane. It functions in the pathway secondary metabolite biosynthesis; terpenoid biosynthesis. Functionally, cytochrome P4590 monooxygenase part of the gene cluster that mediates the biosynthesis of betaestacins. The bifunctional terpene synthase btcA converts isopentenyl diphosphate (IPP) and dimethylallyl diphosphate (DMAPP) into the sesterterpene betaestacin I. The C-terminal prenyltransferase (PT) domain of btcA catalyzes formation of GFPP, whereas the N-terminal terpene cyclase (TC) domain catalyzes the cyclization of GFPP into betaestacin I. The cytochrome P450 monooxygenase btcB oxidizes the C25 methyl group of betaestacin I to yield the carboxylic acid betaestacin IV via the alcohol betaestacin III. The cytochrome P450 monooxygenase btcC further catalyzes the multistep oxidation of betaestacin IV to produce several compounds, including betaestacins Va, Vb, Vc and VI. This Colletotrichum orbiculare (strain 104-T / ATCC 96160 / CBS 514.97 / LARS 414 / MAFF 240422) (Cucumber anthracnose fungus) protein is Cytochrome P450 monooxygenase btcC.